The primary structure comprises 1001 residues: E3 ubiquitin-protein ligase etc-1 (1001 aa).

Residues 28–57 (QEKAARKVQKFWRGHRVQHNQRLLFRAEFD) form the IQ domain. Residues 66 to 115 (LEETIKMAQLLVNFYETNKDEERLVMTLSELVKLKTSDKEFEKRIRETQR) adopt a coiled-coil conformation. In terms of domain architecture, HECT spans 658 to 1001 (KVNDLKSMVR…INSGAGFELA (344 aa)). C969 serves as the catalytic Glycyl thioester intermediate.

Interacts with ify-1 and cyb-1.

The catalysed reaction is S-ubiquitinyl-[E2 ubiquitin-conjugating enzyme]-L-cysteine + [acceptor protein]-L-lysine = [E2 ubiquitin-conjugating enzyme]-L-cysteine + N(6)-ubiquitinyl-[acceptor protein]-L-lysine.. It functions in the pathway protein modification; protein ubiquitination. In terms of biological role, E3 ubiquitin-protein ligase that accepts ubiquitin from E2 ubiquitin-conjugating enzymes, such as ubc-18, in the form of a thioester and then directly transfers the ubiquitin to targeted substrates. Ubiquitinates ify-1 and cyb-1 targeting them for degradation in post-meiotic embryos. The protein is E3 ubiquitin-protein ligase etc-1 of Caenorhabditis elegans.